The chain runs to 189 residues: MKYQYFAKKSFLFISMLAAFKTFAFELPSVPFPAPGSDEILFVVRDTTFNTKAPVNVKVSDFWTNRDVKRKPYEDVYGQSVFTTSGTKWLTSYMTVNINDKDYTMAAVSGYKSGHSAVFVKSDQVQLQHSYNSVANFVGEDEDSIPSKMYLDETPEYFVNVEAYESGSGNVLVMCISNKESFFECEHQR.

Positions 1–24 are cleaved as a signal peptide; the sequence is MKYQYFAKKSFLFISMLAAFKTFA. The cysteines at positions 175 and 185 are disulfide-linked.

This sequence belongs to the TDH hemolysin family. In terms of assembly, homodimer.

Bacterial hemolysins are exotoxins that attack blood cell membranes and cause cell rupture by mechanisms not clearly defined. This is Thermostable direct hemolysin (tdh) from Vibrio mimicus.